The following is a 468-amino-acid chain: uncharacterized protein (468 aa).

The region spanning 3-61 (TFANGMTLDVTVDALAPGGKAVCRHEGRVIFVDRGLPGQQLHVRLTTVRKRFAEAECLA) is the TRAM domain. The [4Fe-4S] cluster site is built by Cys74, Cys80, Cys83, and Cys162. Residues Gln288, Tyr317, Glu338, and Asp389 each contribute to the S-adenosyl-L-methionine site. Cys416 acts as the Nucleophile in catalysis.

The protein belongs to the class I-like SAM-binding methyltransferase superfamily. RNA M5U methyltransferase family.

This is an uncharacterized protein from Nitratidesulfovibrio vulgaris (strain ATCC 29579 / DSM 644 / CCUG 34227 / NCIMB 8303 / VKM B-1760 / Hildenborough) (Desulfovibrio vulgaris).